Reading from the N-terminus, the 117-residue chain is Large ribosomal subunit protein bL19 (117 aa).

It belongs to the bacterial ribosomal protein bL19 family.

This protein is located at the 30S-50S ribosomal subunit interface and may play a role in the structure and function of the aminoacyl-tRNA binding site. The polypeptide is Large ribosomal subunit protein bL19 (Aliivibrio salmonicida (strain LFI1238) (Vibrio salmonicida (strain LFI1238))).